Reading from the N-terminus, the 94-residue chain is Small ribosomal subunit protein bS6 (94 aa).

The protein belongs to the bacterial ribosomal protein bS6 family.

Functionally, binds together with bS18 to 16S ribosomal RNA. The protein is Small ribosomal subunit protein bS6 of Clostridium botulinum (strain Kyoto / Type A2).